A 215-amino-acid polypeptide reads, in one-letter code: Pyridoxine/pyridoxamine 5'-phosphate oxidase (215 aa).

Residues 9-12 (RKEY) and K67 each bind substrate. Residues 62-67 (RIVLLK), 77-78 (YT), K84, and Q106 contribute to the FMN site. Substrate-binding residues include Y124, R128, and S132. Residues 141–142 (QS) and W187 contribute to the FMN site. 193 to 195 (RLH) contributes to the substrate binding site. Position 197 (R197) interacts with FMN.

Belongs to the pyridoxamine 5'-phosphate oxidase family. Homodimer. The cofactor is FMN.

The enzyme catalyses pyridoxamine 5'-phosphate + O2 + H2O = pyridoxal 5'-phosphate + H2O2 + NH4(+). The catalysed reaction is pyridoxine 5'-phosphate + O2 = pyridoxal 5'-phosphate + H2O2. It functions in the pathway cofactor metabolism; pyridoxal 5'-phosphate salvage; pyridoxal 5'-phosphate from pyridoxamine 5'-phosphate: step 1/1. The protein operates within cofactor metabolism; pyridoxal 5'-phosphate salvage; pyridoxal 5'-phosphate from pyridoxine 5'-phosphate: step 1/1. In terms of biological role, catalyzes the oxidation of either pyridoxine 5'-phosphate (PNP) or pyridoxamine 5'-phosphate (PMP) into pyridoxal 5'-phosphate (PLP). In Cytophaga hutchinsonii (strain ATCC 33406 / DSM 1761 / CIP 103989 / NBRC 15051 / NCIMB 9469 / D465), this protein is Pyridoxine/pyridoxamine 5'-phosphate oxidase.